A 383-amino-acid chain; its full sequence is Caspase a (383 aa).

Positions 1-142 are excised as a propeptide; it reads MAKSIKDHLQ…ETYEIKDKSV (142 aa). The Pyrin domain maps to 8–81; it reads HLQDALSNIG…RGIKCNAVAE (74 aa). Residues 87–106 are disordered; sequence TGQGGVSQPEPPVPEPIPKD. Active-site residues include His220 and Cys270. A propeptide spanning residues 275-296 is cleaved from the precursor; that stretch reads HGRVWASDGEPDEPIEIEDDDF.

Belongs to the peptidase C14A family. In terms of assembly, heterotetramer that consists of two anti-parallel arranged heterodimers, each one formed by a 20 kDa (p20) and a 10 kDa (p10) subunit. Interacts (via pyrin domain) with pycard (via pyrin domain). Interacts with caspb. Component of NLRP1 inflammasomes. Inflammasomes are supramolecular complexes that assemble in the cytosol in response to pathogens and other damage-associated signals and play critical roles in innate immunity and inflammation. The NLRP1 inflammasome is composed of the signal sensor nlrp1, and the adapter pycard (asc), which recruit effector pro-inflammatory caspases caspa and/or caspb. The interaction between nlrp1 and pycard is required for the sequential recruitment of caspa and then caspb. Caspa is preferentially recruited first and this causes the cleavage of pro-il1b into the midformed il1b. This is followed by the recruitment of caspb, which is activated and cleaves the midformed il1b resulting in il1b maturation. Interacts with caiap. The two subunits are derived from the precursor sequence by an autocatalytic mechanism.

The protein resides in the inflammasome. It localises to the cytoplasm. The catalysed reaction is Strict requirement for an Asp residue at position P1 and has a preferred cleavage sequence of Tyr-Val-Ala-Asp-|-.. Functionally, thiol protease which cleaves IL-1 beta (il1b), releasing the mature cytokine which is involved in a variety of inflammatory processes, and mediates apoptosis. Component of the NLRP1 inflammasome, which plays a crucial role in innate immunity and inflammation. In response to pathogens and other damage-associated signals, recruited to the NLRP1 inflammasome in its precursor form. Its subsequent activation causes the cleavage of pro-il1b into the midformed il1b, which then evetually leads to il1b maturation and secretion in the extracellular milieu. Required for the development of the cartilaginous pharyngeal skeleton. This is Caspase a from Danio rerio (Zebrafish).